A 157-amino-acid chain; its full sequence is MKKITSFTIDHTKLNPGIYVSRKDTFENVIFTTIDIRIKAPNIEPIIENAAIHTIEHIGATLLRNNEVWAEKIVYFGPMGCRTGFYLIIFGNYESKDLIDLISWLFSEIVNFSEPIPGASHKECGNYKEHNLDMAKYESSKYLQILNNIKEENLKYP.

Fe cation contacts are provided by His-53, His-57, and Cys-124.

It belongs to the LuxS family. In terms of assembly, homodimer. It depends on Fe cation as a cofactor.

It carries out the reaction S-(5-deoxy-D-ribos-5-yl)-L-homocysteine = (S)-4,5-dihydroxypentane-2,3-dione + L-homocysteine. In terms of biological role, involved in the synthesis of autoinducer 2 (AI-2) which is secreted by bacteria and is used to communicate both the cell density and the metabolic potential of the environment. The regulation of gene expression in response to changes in cell density is called quorum sensing. Catalyzes the transformation of S-ribosylhomocysteine (RHC) to homocysteine (HC) and 4,5-dihydroxy-2,3-pentadione (DPD). The protein is S-ribosylhomocysteine lyase of Borreliella afzelii (strain PKo) (Borrelia afzelii).